Consider the following 870-residue polypeptide: DNA mismatch repair protein MutS (870 aa).

620–627 provides a ligand contact to ATP; sequence GPNMAGKS.

The protein belongs to the DNA mismatch repair MutS family.

Functionally, this protein is involved in the repair of mismatches in DNA. It is possible that it carries out the mismatch recognition step. This protein has a weak ATPase activity. This Syntrophotalea carbinolica (strain DSM 2380 / NBRC 103641 / GraBd1) (Pelobacter carbinolicus) protein is DNA mismatch repair protein MutS.